The sequence spans 472 residues: L-fuculokinase (472 aa).

Belongs to the FGGY kinase family. A divalent metal cation serves as cofactor.

It catalyses the reaction L-fuculose + ATP = L-fuculose 1-phosphate + ADP + H(+). Its pathway is carbohydrate degradation; L-fucose degradation; L-lactaldehyde and glycerone phosphate from L-fucose: step 2/3. In terms of biological role, catalyzes the phosphorylation of L-fuculose. The sequence is that of L-fuculokinase from Salmonella typhi.